We begin with the raw amino-acid sequence, 500 residues long: Apolipoprotein N-acyltransferase (500 aa).

The next 6 membrane-spanning stretches (helical) occupy residues 5–25 (VAPFAAWFLAWIALAPLWIFV), 38–58 (LLLLGLTWGIGYHGVALFWIT), 74–94 (LAITIFCWSFISFYGGLFGAI), 111–131 (ILIGTAMWCVLESLWSAGPLW), 145–165 (AILHLGQISGPNLVTAAIVSV), and 185–205 (LAIATGLLITLHLIGFGLYTA). The CN hydrolase domain occupies 215 to 462 (LKVGIVQGNI…ETIYRRQTQN (248 aa)). The Proton acceptor role is filled by E261. K318 is an active-site residue. Catalysis depends on C369, which acts as the Nucleophile. Residues 469 to 489 (DWFTPLLVGLSFLGWSLNIFW) form a helical membrane-spanning segment.

The protein belongs to the CN hydrolase family. Apolipoprotein N-acyltransferase subfamily.

Its subcellular location is the cell inner membrane. It carries out the reaction N-terminal S-1,2-diacyl-sn-glyceryl-L-cysteinyl-[lipoprotein] + a glycerophospholipid = N-acyl-S-1,2-diacyl-sn-glyceryl-L-cysteinyl-[lipoprotein] + a 2-acyl-sn-glycero-3-phospholipid + H(+). Its pathway is protein modification; lipoprotein biosynthesis (N-acyl transfer). Catalyzes the phospholipid dependent N-acylation of the N-terminal cysteine of apolipoprotein, the last step in lipoprotein maturation. In Nostoc sp. (strain PCC 7120 / SAG 25.82 / UTEX 2576), this protein is Apolipoprotein N-acyltransferase.